The primary structure comprises 75 residues: uncharacterized protein (75 aa).

This is an uncharacterized protein from Acidianus filamentous virus 1 (isolate United States/Yellowstone) (AFV-1).